Consider the following 216-residue polypeptide: Pyridoxine/pyridoxamine 5'-phosphate oxidase (216 aa).

Residues 63–68 (RMVLMK), 78–79 (YS), K85, and Q107 each bind FMN. K68 lines the substrate pocket. The substrate site is built by Y125 and R129. Residues 142 to 143 (QS) and W187 contribute to the FMN site. 193–195 (RLH) contributes to the substrate binding site. R197 is a binding site for FMN.

The protein belongs to the pyridoxamine 5'-phosphate oxidase family. In terms of assembly, homodimer. Requires FMN as cofactor.

It catalyses the reaction pyridoxamine 5'-phosphate + O2 + H2O = pyridoxal 5'-phosphate + H2O2 + NH4(+). The enzyme catalyses pyridoxine 5'-phosphate + O2 = pyridoxal 5'-phosphate + H2O2. It functions in the pathway cofactor metabolism; pyridoxal 5'-phosphate salvage; pyridoxal 5'-phosphate from pyridoxamine 5'-phosphate: step 1/1. The protein operates within cofactor metabolism; pyridoxal 5'-phosphate salvage; pyridoxal 5'-phosphate from pyridoxine 5'-phosphate: step 1/1. Functionally, catalyzes the oxidation of either pyridoxine 5'-phosphate (PNP) or pyridoxamine 5'-phosphate (PMP) into pyridoxal 5'-phosphate (PLP). The chain is Pyridoxine/pyridoxamine 5'-phosphate oxidase from Bradyrhizobium sp. (strain ORS 278).